We begin with the raw amino-acid sequence, 255 residues long: FMR1 neighbor protein (255 aa).

At 1–68 (MSSHRRKAKG…ESLKMRVSKP (68 aa)) the chain is on the cytoplasmic side. The chain crosses the membrane as a helical span at residues 69–89 (FGMLMLSIWILLFVCYYLSYY). The Extracellular portion of the chain corresponds to 90-183 (LCSGSSYFVL…FAPFRDVPKQ (94 aa)). Residues 125–184 (LLNFFFPTTCNLRENQVAKPCNELQDLSESECLRHKCCFSSSGTTSFKCFAPFRDVPKQM) form the P-type domain. Residues 184-204 (MMQMFGLGAISLILVCLPIYC) form a helical membrane-spanning segment. Topologically, residues 205–255 (RSLFWRSEPADDLQRQDNRVVTGLKKQRRKRKRKSEMLQKAARGREEHGDE) are cytoplasmic. The tract at residues 220-255 (QDNRVVTGLKKQRRKRKRKSEMLQKAARGREEHGDE) is disordered. Positions 229 to 238 (KKQRRKRKRK) are enriched in basic residues.

Testis-specific. Expressed in melanoma, sarcoma, lung, breast, bladder, esophageal and ovarian cancers.

Its subcellular location is the membrane. In Homo sapiens (Human), this protein is FMR1 neighbor protein.